A 418-amino-acid polypeptide reads, in one-letter code: MIMFQKPKGTRDFLPEEMKKRKVIEKKLRKVFDSYNFSEINTPTFESFELLSKKTGDEIRTQLFVFKDHGDREMGLRPELTSSVARFYINEFKNTPKPVKLYYFTNCFRYENPQAGRYREFWQMGSELIGSNKPIADAEVINMAIEGLKEINMDFEINIGHLGVLKGVFEKYDLSDDEGNEIRRLIDKEDMDGLKSALNRIESEKNIEISEKVFEVLDLKGGREVISKLKEKLAEFESSIAALENLDSILEFVPHEYIINFGIARGLDYYTGMVFEIYGKREGARQVCGGGRYDNLIELFEGEPSPAVGFAYGFDRIMLNIDDFEVEEESIFVVPVKSSDMLLNECLKIAKTLREAGKAVELDLMGRKLNKALNYANTKGIKKVIIVGENDILEGKVALKNMETGEQSLIELKDILTI.

This sequence belongs to the class-II aminoacyl-tRNA synthetase family.

The protein localises to the cytoplasm. The enzyme catalyses tRNA(His) + L-histidine + ATP = L-histidyl-tRNA(His) + AMP + diphosphate + H(+). The chain is Histidine--tRNA ligase from Methanococcus maripaludis (strain C7 / ATCC BAA-1331).